Consider the following 103-residue polypeptide: Small ribosomal subunit protein uS10 (103 aa).

It belongs to the universal ribosomal protein uS10 family. In terms of assembly, part of the 30S ribosomal subunit.

In terms of biological role, involved in the binding of tRNA to the ribosomes. The protein is Small ribosomal subunit protein uS10 of Pectobacterium atrosepticum (strain SCRI 1043 / ATCC BAA-672) (Erwinia carotovora subsp. atroseptica).